The chain runs to 461 residues: Homocitrate synthase (461 aa).

The Pyruvate carboxyltransferase domain maps to 4-259 (VGILDSTLRE…IEVVKLDKLQ (256 aa)). R12 provides a ligand contact to 2-oxoglutarate. Mg(2+) is bound at residue E13. 3 residues coordinate 2-oxoglutarate: H76, R136, and T170. Mg(2+) contacts are provided by H198 and H200. Residue H292 is the Proton acceptor of the active site.

It belongs to the alpha-IPM synthase/homocitrate synthase family. Homocitrate synthase LYS20/LYS21 subfamily. Mg(2+) is required as a cofactor. The cofactor is Mn(2+).

The catalysed reaction is acetyl-CoA + 2-oxoglutarate + H2O = (2R)-homocitrate + CoA + H(+). Its pathway is amino-acid biosynthesis; L-lysine biosynthesis via AAA pathway; L-alpha-aminoadipate from 2-oxoglutarate: step 1/5. Functionally, catalyzes the aldol-type condensation of 2-oxoglutarate with acetyl-CoA to yield homocitrate. Carries out the first step of the alpha-aminoadipate (AAA) lysine biosynthesis pathway. The polypeptide is Homocitrate synthase (Saccharolobus islandicus (strain L.S.2.15 / Lassen #1) (Sulfolobus islandicus)).